A 339-amino-acid polypeptide reads, in one-letter code: Methylthioribose-1-phosphate isomerase (339 aa).

Residues 50–52 (RGA), Arg-84, and Gln-186 contribute to the substrate site. The active-site Proton donor is the Asp-227. 237–238 (NK) is a substrate binding site.

Belongs to the eIF-2B alpha/beta/delta subunits family. MtnA subfamily.

The enzyme catalyses 5-(methylsulfanyl)-alpha-D-ribose 1-phosphate = 5-(methylsulfanyl)-D-ribulose 1-phosphate. It participates in amino-acid biosynthesis; L-methionine biosynthesis via salvage pathway; L-methionine from S-methyl-5-thio-alpha-D-ribose 1-phosphate: step 1/6. In terms of biological role, catalyzes the interconversion of methylthioribose-1-phosphate (MTR-1-P) into methylthioribulose-1-phosphate (MTRu-1-P). In Sulfurihydrogenibium sp. (strain YO3AOP1), this protein is Methylthioribose-1-phosphate isomerase.